A 562-amino-acid polypeptide reads, in one-letter code: NAD-dependent malic enzyme (562 aa).

Tyrosine 101 acts as the Proton donor in catalysis. Arginine 154 is a binding site for NAD(+). The active-site Proton acceptor is the lysine 172. A divalent metal cation contacts are provided by glutamate 243, aspartate 244, and aspartate 267. NAD(+)-binding residues include aspartate 267 and asparagine 415.

It belongs to the malic enzymes family. In terms of assembly, homotetramer. Mg(2+) serves as cofactor. The cofactor is Mn(2+).

The catalysed reaction is (S)-malate + NAD(+) = pyruvate + CO2 + NADH. It catalyses the reaction oxaloacetate + H(+) = pyruvate + CO2. This Shewanella frigidimarina (strain NCIMB 400) protein is NAD-dependent malic enzyme.